Consider the following 265-residue polypeptide: Mlc titration factor A (265 aa).

Residues histidine 111, histidine 148, histidine 152, and glutamate 211 each coordinate Zn(2+).

Belongs to the MtfA family. In terms of assembly, interacts with Mlc. It depends on Zn(2+) as a cofactor.

It is found in the cytoplasm. In terms of biological role, involved in the modulation of the activity of the glucose-phosphotransferase system (glucose-PTS). Interacts with the transcriptional repressor Mlc, preventing its interaction with DNA and leading to the modulation of expression of genes regulated by Mlc, including ptsG, which encodes the PTS system glucose-specific EIICB component. Shows zinc-dependent metallopeptidase activity. The protein is Mlc titration factor A of Escherichia coli (strain ATCC 8739 / DSM 1576 / NBRC 3972 / NCIMB 8545 / WDCM 00012 / Crooks).